A 156-amino-acid polypeptide reads, in one-letter code: Small ribosomal subunit protein uS7 (156 aa).

The protein belongs to the universal ribosomal protein uS7 family. In terms of assembly, part of the 30S ribosomal subunit. Contacts proteins S9 and S11.

Functionally, one of the primary rRNA binding proteins, it binds directly to 16S rRNA where it nucleates assembly of the head domain of the 30S subunit. Is located at the subunit interface close to the decoding center, probably blocks exit of the E-site tRNA. The chain is Small ribosomal subunit protein uS7 from Clostridium botulinum (strain Kyoto / Type A2).